The chain runs to 334 residues: Holliday junction branch migration complex subunit RuvB (334 aa).

Residues 4 to 184 are large ATPase domain (RuvB-L); the sequence is ADRLIQPQLQ…FGIPLRLEFY (181 aa). Residues Arg-24, Gly-65, Lys-68, Thr-69, Thr-70, 131–133, Arg-174, Tyr-184, and Arg-221 contribute to the ATP site; that span reads EDY. Thr-69 lines the Mg(2+) pocket. The tract at residues 185 to 255 is small ATPAse domain (RuvB-S); sequence NVKDLSTIVS…VAEHALDLLD (71 aa). The tract at residues 258-334 is head domain (RuvB-H); that stretch reads GEGFDYMDRK…YLHFGMIKPE (77 aa). 3 residues coordinate DNA: Arg-294, Arg-313, and Arg-318.

The protein belongs to the RuvB family. As to quaternary structure, homohexamer. Forms an RuvA(8)-RuvB(12)-Holliday junction (HJ) complex. HJ DNA is sandwiched between 2 RuvA tetramers; dsDNA enters through RuvA and exits via RuvB. An RuvB hexamer assembles on each DNA strand where it exits the tetramer. Each RuvB hexamer is contacted by two RuvA subunits (via domain III) on 2 adjacent RuvB subunits; this complex drives branch migration. In the full resolvosome a probable DNA-RuvA(4)-RuvB(12)-RuvC(2) complex forms which resolves the HJ.

The protein resides in the cytoplasm. It catalyses the reaction ATP + H2O = ADP + phosphate + H(+). Its function is as follows. The RuvA-RuvB-RuvC complex processes Holliday junction (HJ) DNA during genetic recombination and DNA repair, while the RuvA-RuvB complex plays an important role in the rescue of blocked DNA replication forks via replication fork reversal (RFR). RuvA specifically binds to HJ cruciform DNA, conferring on it an open structure. The RuvB hexamer acts as an ATP-dependent pump, pulling dsDNA into and through the RuvAB complex. RuvB forms 2 homohexamers on either side of HJ DNA bound by 1 or 2 RuvA tetramers; 4 subunits per hexamer contact DNA at a time. Coordinated motions by a converter formed by DNA-disengaged RuvB subunits stimulates ATP hydrolysis and nucleotide exchange. Immobilization of the converter enables RuvB to convert the ATP-contained energy into a lever motion, pulling 2 nucleotides of DNA out of the RuvA tetramer per ATP hydrolyzed, thus driving DNA branch migration. The RuvB motors rotate together with the DNA substrate, which together with the progressing nucleotide cycle form the mechanistic basis for DNA recombination by continuous HJ branch migration. Branch migration allows RuvC to scan DNA until it finds its consensus sequence, where it cleaves and resolves cruciform DNA. The chain is Holliday junction branch migration complex subunit RuvB from Shewanella sp. (strain MR-7).